The chain runs to 210 residues: Adenylate kinase (210 aa).

10–15 (GSGKGT) contributes to the ATP binding site. Residues 28 to 57 (SVGKVLRTVMESNTAEADVVKKFIKSGKLV) are NMP. AMP-binding positions include Arg34, 55 to 57 (KLV), 83 to 86 (GYPR), and Gln90. An LID region spans residues 120–158 (GRISCTDCGTIYNKLYCMPKINGVCDICNSSSFQNRVDD). Arg121 contacts ATP. 2 residues coordinate Zn(2+): Cys124 and Cys127. 130-131 (IY) provides a ligand contact to ATP. Residues Cys144 and Cys147 each contribute to the Zn(2+) site. AMP-binding residues include Arg155 and Arg166. Position 194 (Gln194) interacts with ATP.

This sequence belongs to the adenylate kinase family. As to quaternary structure, monomer.

The protein localises to the cytoplasm. It catalyses the reaction AMP + ATP = 2 ADP. It participates in purine metabolism; AMP biosynthesis via salvage pathway; AMP from ADP: step 1/1. Functionally, catalyzes the reversible transfer of the terminal phosphate group between ATP and AMP. Plays an important role in cellular energy homeostasis and in adenine nucleotide metabolism. This is Adenylate kinase from Orientia tsutsugamushi (strain Boryong) (Rickettsia tsutsugamushi).